A 536-amino-acid chain; its full sequence is MFS-type efflux pump MFS1 (536 aa).

3 helical membrane-spanning segments follow: residues 30–50 (VTGL…LLVA), 80–100 (YLLT…FFPV), and 102–122 (WVFL…GAAP). N-linked (GlcNAc...) asparagine glycosylation occurs at N123. 3 helical membrane-spanning segments follow: residues 133–153 (VAGI…AYSI), 163–183 (GAIG…GGAF), and 191–211 (WCFY…LIFL). An N-linked (GlcNAc...) asparagine glycan is attached at N221. The next 8 helical transmembrane spans lie at 234-254 (IGTA…QWGG), 264-284 (IIAL…FQIR), 306-326 (FFLF…PIWF), 342-362 (IPMV…VTAI), 366-386 (APLY…LTTF), 400-420 (IIFG…AQAV), 426-446 (VAVG…LFVS), and 503-523 (TWYV…GMEW).

The protein belongs to the major facilitator superfamily. TCR/Tet family.

The protein localises to the cell membrane. In terms of biological role, MFS-type efflux pump involved in the modulation susceptibility to azoles, including fluconazole, itraconazole, ketoconazole, miconazole and voriconazole. Confers also increased resistance chloramphenicol and thiamphenicol, suggesting that it acts as a pleiotropic drug transporter with a broad substrate spectrum. Finally, increases the tolerance to cycloheximide when expressed in S.cerevisiae, but not in dermatophyte species. The sequence is that of MFS-type efflux pump MFS1 from Trichophyton rubrum (strain ATCC MYA-4607 / CBS 118892) (Athlete's foot fungus).